The following is an 80-amino-acid chain: Putative membrane protein insertion efficiency factor (80 aa).

Belongs to the UPF0161 family.

The protein localises to the cell membrane. Its function is as follows. Could be involved in insertion of integral membrane proteins into the membrane. This chain is Putative membrane protein insertion efficiency factor, found in Corynebacterium jeikeium (strain K411).